The primary structure comprises 364 residues: Chorismate synthase (364 aa).

NADP(+)-binding residues include R48 and R54. FMN contacts are provided by residues 125–127 (RSS), 238–239 (NA), G278, 293–297 (KPTSS), and R319.

The protein belongs to the chorismate synthase family. As to quaternary structure, homotetramer. FMNH2 serves as cofactor.

It carries out the reaction 5-O-(1-carboxyvinyl)-3-phosphoshikimate = chorismate + phosphate. The protein operates within metabolic intermediate biosynthesis; chorismate biosynthesis; chorismate from D-erythrose 4-phosphate and phosphoenolpyruvate: step 7/7. Its function is as follows. Catalyzes the anti-1,4-elimination of the C-3 phosphate and the C-6 proR hydrogen from 5-enolpyruvylshikimate-3-phosphate (EPSP) to yield chorismate, which is the branch point compound that serves as the starting substrate for the three terminal pathways of aromatic amino acid biosynthesis. This reaction introduces a second double bond into the aromatic ring system. This is Chorismate synthase from Marinobacter nauticus (strain ATCC 700491 / DSM 11845 / VT8) (Marinobacter aquaeolei).